A 329-amino-acid chain; its full sequence is MKITVIGAGSWGTALALHFSQHGNRVSLWTRNADQVRQMQEARENKRGLPGFSFPETLEVCADLADALKDSGLVLIVTSVAGLRSSAELLKQYGAGHLPVLAACKGFEQDTGLLTFQVLKEVLPDNKKIGVLSGPSFAQELAKQLPCAVVLASENQEWVEELVPQLNTSVMRLYGSTDVIGVAVGGAVKNVMAIATGLSDGLEYGLNARAALVTRGLAEITRLASAMGAQPKTMMGLAGIGDLILTCTGALSRNRRVGLGLAEGKELHQVLVEIGHVSEGVSTIEEVFNTACKYQIDMPITQTLLQLIRKEMTPQQVVERLMERSARFE.

4 residues coordinate NADPH: serine 10, tryptophan 11, arginine 31, and lysine 105. Lysine 105, glycine 134, and serine 136 together coordinate sn-glycerol 3-phosphate. Alanine 138 contacts NADPH. 5 residues coordinate sn-glycerol 3-phosphate: lysine 189, aspartate 242, serine 252, arginine 253, and asparagine 254. Lysine 189 (proton acceptor) is an active-site residue. Residue arginine 253 coordinates NADPH. Positions 277 and 279 each coordinate NADPH.

It belongs to the NAD-dependent glycerol-3-phosphate dehydrogenase family.

Its subcellular location is the cytoplasm. It catalyses the reaction sn-glycerol 3-phosphate + NAD(+) = dihydroxyacetone phosphate + NADH + H(+). The enzyme catalyses sn-glycerol 3-phosphate + NADP(+) = dihydroxyacetone phosphate + NADPH + H(+). It participates in membrane lipid metabolism; glycerophospholipid metabolism. In terms of biological role, catalyzes the reduction of the glycolytic intermediate dihydroxyacetone phosphate (DHAP) to sn-glycerol 3-phosphate (G3P), the key precursor for phospholipid synthesis. The sequence is that of Glycerol-3-phosphate dehydrogenase [NAD(P)+] from Neisseria meningitidis serogroup A / serotype 4A (strain DSM 15465 / Z2491).